A 37-amino-acid chain; its full sequence is Large ribosomal subunit protein bL36 (37 aa).

Belongs to the bacterial ribosomal protein bL36 family.

The protein is Large ribosomal subunit protein bL36 of Shewanella frigidimarina (strain NCIMB 400).